Consider the following 242-residue polypeptide: Ubiquinone biosynthesis O-methyltransferase (242 aa).

Arg44, Gly64, Asp85, and Met129 together coordinate S-adenosyl-L-methionine.

It belongs to the methyltransferase superfamily. UbiG/COQ3 family.

It catalyses the reaction a 3-demethylubiquinol + S-adenosyl-L-methionine = a ubiquinol + S-adenosyl-L-homocysteine + H(+). The catalysed reaction is a 3-(all-trans-polyprenyl)benzene-1,2-diol + S-adenosyl-L-methionine = a 2-methoxy-6-(all-trans-polyprenyl)phenol + S-adenosyl-L-homocysteine + H(+). Its pathway is cofactor biosynthesis; ubiquinone biosynthesis. In terms of biological role, O-methyltransferase that catalyzes the 2 O-methylation steps in the ubiquinone biosynthetic pathway. This is Ubiquinone biosynthesis O-methyltransferase from Salmonella choleraesuis (strain SC-B67).